Consider the following 313-residue polypeptide: Protein FixB (313 aa).

FAD is bound at residue 255–283; the sequence is LYLAVGISGQIQHMVGANASQTIFAINKD.

This sequence belongs to the ETF alpha-subunit/FixB family. As to quaternary structure, heterodimer of FixA and FixB.

Its pathway is amine and polyamine metabolism; carnitine metabolism. Functionally, required for anaerobic carnitine reduction. May bring reductant to CaiA. This is Protein FixB from Escherichia coli O17:K52:H18 (strain UMN026 / ExPEC).